A 98-amino-acid polypeptide reads, in one-letter code: Integration host factor subunit alpha (98 aa).

The segment at 51–71 is disordered; sequence NFDLRDKNERPGRNPKTGEDI. Residues 53 to 69 are compositionally biased toward basic and acidic residues; the sequence is DLRDKNERPGRNPKTGE.

The protein belongs to the bacterial histone-like protein family. Heterodimer of an alpha and a beta chain.

In terms of biological role, this protein is one of the two subunits of integration host factor, a specific DNA-binding protein that functions in genetic recombination as well as in transcriptional and translational control. In Vibrio parahaemolyticus serotype O3:K6 (strain RIMD 2210633), this protein is Integration host factor subunit alpha.